We begin with the raw amino-acid sequence, 464 residues long: Methionine aminopeptidase 2-2 (464 aa).

The segment at 1–106 is disordered; the sequence is MGAKTYEGGD…PRVPLSQLFP (106 aa). The span at 37–53 shows a compositional bias: acidic residues; it reads EDGDGEFGSDDDDDGGD. Basic residues predominate over residues 70–86; it reads PKKKKRSKKKKNNKKKS. His-216 lines the substrate pocket. The a divalent metal cation site is built by Asp-237, Asp-248, and His-317. His-325 provides a ligand contact to substrate. The a divalent metal cation site is built by Glu-350 and Glu-445.

It belongs to the peptidase M24A family. Methionine aminopeptidase eukaryotic type 2 subfamily. It depends on Co(2+) as a cofactor. The cofactor is Zn(2+). Requires Mn(2+) as cofactor. Fe(2+) serves as cofactor.

The protein resides in the cytoplasm. It carries out the reaction Release of N-terminal amino acids, preferentially methionine, from peptides and arylamides.. Cotranslationally removes the N-terminal methionine from nascent proteins. The N-terminal methionine is often cleaved when the second residue in the primary sequence is small and uncharged (Met-Ala-, Cys, Gly, Pro, Ser, Thr, or Val). This is Methionine aminopeptidase 2-2 from Talaromyces stipitatus (strain ATCC 10500 / CBS 375.48 / QM 6759 / NRRL 1006) (Penicillium stipitatum).